Consider the following 181-residue polypeptide: Protein Syd (181 aa).

This sequence belongs to the Syd family.

The protein localises to the cell inner membrane. Functionally, interacts with the SecY protein in vivo. May bind preferentially to an uncomplexed state of SecY, thus functioning either as a chelating agent for excess SecY in the cell or as a regulatory factor that negatively controls the translocase function. In Citrobacter koseri (strain ATCC BAA-895 / CDC 4225-83 / SGSC4696), this protein is Protein Syd.